The following is a 177-amino-acid chain: Glutamyl-tRNA(Gln) amidotransferase subunit F, mitochondrial (177 aa).

The N-terminal 16 residues, 1–16 (MIRINSRGLTVSTRRF), are a transit peptide targeting the mitochondrion. The interval 148-177 (PAKGETQGSFNVANMNPRNRPFATIRSKQG) is disordered. Polar residues predominate over residues 153–164 (TQGSFNVANMNP).

This sequence belongs to the GatF family. As to quaternary structure, subunit of the heterotrimeric GatFAB amidotransferase (AdT) complex, composed of A, B and F subunits.

It is found in the mitochondrion inner membrane. It catalyses the reaction L-glutamyl-tRNA(Gln) + L-glutamine + ATP + H2O = L-glutaminyl-tRNA(Gln) + L-glutamate + ADP + phosphate + H(+). Its function is as follows. Allows the formation of correctly charged Gln-tRNA(Gln) through the transamidation of misacylated Glu-tRNA(Gln) in the mitochondria. The reaction takes place in the presence of glutamine and ATP through an activated gamma-phospho-Glu-tRNA(Gln). Required for proper protein synthesis within the mitochondrion. This Scheffersomyces stipitis (strain ATCC 58785 / CBS 6054 / NBRC 10063 / NRRL Y-11545) (Yeast) protein is Glutamyl-tRNA(Gln) amidotransferase subunit F, mitochondrial.